A 141-amino-acid chain; its full sequence is Nucleoside diphosphate kinase (141 aa).

K11, F59, R87, T93, R104, and N114 together coordinate ATP. H117 (pros-phosphohistidine intermediate) is an active-site residue.

The protein belongs to the NDK family. In terms of assembly, homotetramer. Mg(2+) serves as cofactor.

The protein resides in the cytoplasm. It catalyses the reaction a 2'-deoxyribonucleoside 5'-diphosphate + ATP = a 2'-deoxyribonucleoside 5'-triphosphate + ADP. It carries out the reaction a ribonucleoside 5'-diphosphate + ATP = a ribonucleoside 5'-triphosphate + ADP. Its function is as follows. Major role in the synthesis of nucleoside triphosphates other than ATP. The ATP gamma phosphate is transferred to the NDP beta phosphate via a ping-pong mechanism, using a phosphorylated active-site intermediate. This Neisseria meningitidis serogroup A / serotype 4A (strain DSM 15465 / Z2491) protein is Nucleoside diphosphate kinase.